The following is a 322-amino-acid chain: MKIKITAEEGQYNAHDAYMHFERQKWAELRDNVELTLSEDDLRQLQGINESLSIQEVIDIYLPLSRLLNLYVKTQQRRHTVRDKFLNSKNENVPYIIGIAGSVAVGKSTTARILQAILSHWPEHPRVALVTTDGFLRPNRELVARNIMHKKGFPESFDTKALIDFVAAIKSGKELISAPIYSHLTYDILPDKKLHLEKPDIVILEGLNVLQSASNYPDHPQRTFVSDFVDFSIFVDAETQLLKKWYVQRFLKFRKGAFTDPKAYFHSYSQMEETQAIDISEKIWDEINGVNLEENIRPTRDRANLILTKATDHQVDSVHLRK.

101-108 (GSVAVGKS) lines the ATP pocket.

The protein belongs to the prokaryotic pantothenate kinase family.

Its subcellular location is the cytoplasm. It catalyses the reaction (R)-pantothenate + ATP = (R)-4'-phosphopantothenate + ADP + H(+). The protein operates within cofactor biosynthesis; coenzyme A biosynthesis; CoA from (R)-pantothenate: step 1/5. The protein is Pantothenate kinase of Psychromonas ingrahamii (strain DSM 17664 / CCUG 51855 / 37).